A 342-amino-acid chain; its full sequence is Protein FDO1 (342 aa).

3 disordered regions span residues Met1–Asp36, Met57–Val76, and Gly299–Thr322. A compositionally biased stretch (polar residues) spans Ala15 to Glu25. Over residues Asn308–Gly319 the composition is skewed to basic and acidic residues.

In terms of assembly, interacts with FKH1.

In concert with FKH1, plays a role in directionality of mating type switching by controlling which donor mating-type locus is inserted into MAT locus during mating type switching. In Saccharomyces cerevisiae (strain ATCC 204508 / S288c) (Baker's yeast), this protein is Protein FDO1.